The sequence spans 318 residues: Bis(5'-nucleosyl)-tetraphosphatase, symmetrical (318 aa).

The segment at 269-318 is disordered; sequence PGREVTGPAPVARAPRRPRERLGRQRSRGNRGNAGNTAVPAKPPVDTPQD. A compositionally biased stretch (basic residues) spans 282–297; the sequence is APRRPRERLGRQRSRG. Residues 309–318 are compositionally biased toward pro residues; it reads AKPPVDTPQD.

Belongs to the Ap4A hydrolase family.

The enzyme catalyses P(1),P(4)-bis(5'-adenosyl) tetraphosphate + H2O = 2 ADP + 2 H(+). Hydrolyzes diadenosine 5',5'''-P1,P4-tetraphosphate to yield ADP. The polypeptide is Bis(5'-nucleosyl)-tetraphosphatase, symmetrical (Xanthomonas oryzae pv. oryzae (strain MAFF 311018)).